We begin with the raw amino-acid sequence, 131 residues long: Phosphoribosyl-AMP cyclohydrolase (131 aa).

Aspartate 82 serves as a coordination point for Mg(2+). A Zn(2+)-binding site is contributed by cysteine 83. Aspartate 84 and aspartate 86 together coordinate Mg(2+). Positions 99 and 106 each coordinate Zn(2+).

It belongs to the PRA-CH family. Homodimer. Requires Mg(2+) as cofactor. It depends on Zn(2+) as a cofactor.

It is found in the cytoplasm. The catalysed reaction is 1-(5-phospho-beta-D-ribosyl)-5'-AMP + H2O = 1-(5-phospho-beta-D-ribosyl)-5-[(5-phospho-beta-D-ribosylamino)methylideneamino]imidazole-4-carboxamide. It functions in the pathway amino-acid biosynthesis; L-histidine biosynthesis; L-histidine from 5-phospho-alpha-D-ribose 1-diphosphate: step 3/9. Its function is as follows. Catalyzes the hydrolysis of the adenine ring of phosphoribosyl-AMP. The protein is Phosphoribosyl-AMP cyclohydrolase of Methanospirillum hungatei JF-1 (strain ATCC 27890 / DSM 864 / NBRC 100397 / JF-1).